The primary structure comprises 759 residues: Multifunctional tryptophan biosynthesis protein (759 aa).

Residues 27 to 223 enclose the Glutamine amidotransferase type-1 domain; the sequence is PIVMIDNYDS…LNLTAGTWEE (197 aa). 80 to 82 serves as a coordination point for L-glutamine; the sequence is GPG. The active-site Nucleophile; for GATase activity is the Cys108. L-glutamine contacts are provided by residues Gln112 and 158 to 159; that span reads SL. Active-site for GATase activity residues include His197 and Glu199. Positions 257 to 519 are indole-3-glycerol phosphate synthase; that stretch reads ILEKIHAQRL…DPAAFARELL (263 aa). The tract at residues 536 to 759 is N-(5'-phosphoribosyl)anthranilate isomerase; the sequence is LVKVCGTRSL…KAFINAVKEL (224 aa).

The catalysed reaction is N-(5-phospho-beta-D-ribosyl)anthranilate = 1-(2-carboxyphenylamino)-1-deoxy-D-ribulose 5-phosphate. It carries out the reaction 1-(2-carboxyphenylamino)-1-deoxy-D-ribulose 5-phosphate + H(+) = (1S,2R)-1-C-(indol-3-yl)glycerol 3-phosphate + CO2 + H2O. It catalyses the reaction chorismate + L-glutamine = anthranilate + pyruvate + L-glutamate + H(+). The protein operates within amino-acid biosynthesis; L-tryptophan biosynthesis; L-tryptophan from chorismate: step 1/5. It participates in amino-acid biosynthesis; L-tryptophan biosynthesis; L-tryptophan from chorismate: step 3/5. It functions in the pathway amino-acid biosynthesis; L-tryptophan biosynthesis; L-tryptophan from chorismate: step 4/5. Functionally, trifunctional enzyme bearing the Gln amidotransferase (GATase) domain of anthranilate synthase, indole-glycerolphosphate synthase, and phosphoribosylanthranilate isomerase activities. The chain is Multifunctional tryptophan biosynthesis protein (trp1) from Schizosaccharomyces pombe (strain 972 / ATCC 24843) (Fission yeast).